The chain runs to 513 residues: ATP synthase subunit alpha (513 aa).

169 to 176 is a binding site for ATP; it reads GDRQTGKT.

This sequence belongs to the ATPase alpha/beta chains family. F-type ATPases have 2 components, CF(1) - the catalytic core - and CF(0) - the membrane proton channel. CF(1) has five subunits: alpha(3), beta(3), gamma(1), delta(1), epsilon(1). CF(0) has three main subunits: a(1), b(2) and c(9-12). The alpha and beta chains form an alternating ring which encloses part of the gamma chain. CF(1) is attached to CF(0) by a central stalk formed by the gamma and epsilon chains, while a peripheral stalk is formed by the delta and b chains.

It is found in the cell inner membrane. The catalysed reaction is ATP + H2O + 4 H(+)(in) = ADP + phosphate + 5 H(+)(out). Produces ATP from ADP in the presence of a proton gradient across the membrane. The alpha chain is a regulatory subunit. This chain is ATP synthase subunit alpha, found in Shewanella sp. (strain ANA-3).